The primary structure comprises 545 residues: ATP synthase subunit alpha (545 aa).

Residue 173–180 coordinates ATP; the sequence is GDRQTGKT.

This sequence belongs to the ATPase alpha/beta chains family. In terms of assembly, F-type ATPases have 2 components, CF(1) - the catalytic core - and CF(0) - the membrane proton channel. CF(1) has five subunits: alpha(3), beta(3), gamma(1), delta(1), epsilon(1). CF(0) has three main subunits: a(1), b(2) and c(9-12). The alpha and beta chains form an alternating ring which encloses part of the gamma chain. CF(1) is attached to CF(0) by a central stalk formed by the gamma and epsilon chains, while a peripheral stalk is formed by the delta and b chains.

Its subcellular location is the cell membrane. The catalysed reaction is ATP + H2O + 4 H(+)(in) = ADP + phosphate + 5 H(+)(out). Produces ATP from ADP in the presence of a proton gradient across the membrane. The alpha chain is a regulatory subunit. The protein is ATP synthase subunit alpha of Clavibacter sepedonicus (Clavibacter michiganensis subsp. sepedonicus).